We begin with the raw amino-acid sequence, 165 residues long: Cysteine and tyrosine-rich protein 1 (165 aa).

Positions 1 to 29 are cleaved as a signal peptide; the sequence is MDALRLPRRLGVLLWKVVLLFVYAEDCRA. The Extracellular segment spans residues 30 to 61; that stretch reads QCGKDCRAYCCNGSTPHCCSYYAYIGSILSGT. Residues 62 to 82 form a helical membrane-spanning segment; that stretch reads AIAGIVFGIVFIMGVIAGIAI. The Cytoplasmic segment spans residues 83–165; sequence CICMCMKNNR…SSSQNRICNN (83 aa). The segment at 127–165 is disordered; the sequence is DLPPPYSPAPQASAQRSPPPPYPGNSRKYSSSQNRICNN. The segment covering 153 to 165 has biased composition (polar residues); the sequence is RKYSSSQNRICNN.

It belongs to the CYYR1 family.

The protein resides in the membrane. This is Cysteine and tyrosine-rich protein 1 (Cyyr1) from Rattus norvegicus (Rat).